The sequence spans 329 residues: Neuropeptides B/W receptor type 1 (329 aa).

Over 1–39 (MHNLSLFEPGRGNVSCGGPFLGCPNESNPAPLPLPQPLA) the chain is Extracellular. Residues Asn-3, Asn-13, and Asn-25 are each glycosylated (N-linked (GlcNAc...) asparagine). A helical membrane pass occupies residues 40–63 (VAVPVVYGVICAVGLAGNSAVLYV). Topologically, residues 64–74 (LLRTPRMKTVT) are cytoplasmic. Residues 75–99 (NVFILNLAIADELFTLVLPINIADF) traverse the membrane as a helical segment. Topologically, residues 100-114 (LLRRWPFGEVMCKLI) are extracellular. The cysteines at positions 111 and 190 are disulfide-linked. Residues 115–134 (VAVDQYNTFSSLYFLAVMSA) form a helical membrane-spanning segment. Residues 135–159 (DRYLVVLATAESRRVSGRTYGAARA) lie on the Cytoplasmic side of the membrane. Residues 160–179 (VSLAVWALVTLVVLPFAVFA) traverse the membrane as a helical segment. Over 180-204 (RLDEEQGRRQCVLVFPQPEAFWWRA) the chain is Extracellular. The helical transmembrane segment at 205 to 226 (SRLYTLVLGFAIPVSTICALYI) threads the bilayer. Residues 227 to 250 (TLLCRLRAIQLDSHAKALDRAKKR) lie on the Cytoplasmic side of the membrane. Residues 251–275 (VTLLVVAILAVCLLCWTPYHLSTIV) form a helical membrane-spanning segment. Residues 276 to 285 (ALTTDLPQTP) lie on the Extracellular side of the membrane. A helical transmembrane segment spans residues 286–300 (LVIGISYFITSLSYA). The Cytoplasmic portion of the chain corresponds to 301-329 (NSCLNPFLYAFLDDSFRRSLRQLVSCRTA).

The protein belongs to the G-protein coupled receptor 1 family.

It is found in the cell membrane. Its function is as follows. Interacts specifically with a number of opioid ligands. Receptor for neuropeptides B and W, which may be involved in neuroendocrine system regulation, food intake and the organization of other signals. The sequence is that of Neuropeptides B/W receptor type 1 (Npbwr1) from Rattus norvegicus (Rat).